The primary structure comprises 195 residues: Apoptosis-associated speck-like protein containing a CARD (195 aa).

One can recognise a Pyrin domain in the interval 1–91 (MGRARDAILD…AGQLQAATHQ (91 aa)). Residues Lys55 and Lys174 each participate in a glycyl lysine isopeptide (Lys-Gly) (interchain with G-Cter in ubiquitin) cross-link. The 89-residue stretch at 107 to 195 (AAKPGLHFID…SYLVEDLERS (89 aa)) folds into the CARD domain. The residue at position 195 (Ser195) is a Phosphoserine.

Self-associates; enforced oligomerization induces apoptosis, NF-kappa-B regulation and interleukin-1 beta secretion. Homooligomers can form disk-like particles of approximately 12 nm diameter and approximately 1 nm height. Next to isoform 1, also isoform 2 and isoform 3 may be involved in oligomerization leading to functional regulation. Component of several inflammasomes containing one pattern recognition receptor/sensor, such as NLRP1, NLRP2, NLRP3, NLRP6, NLRC4, AIM2, MEFV or NOD2, and probably NLRC4, NLRP12 or IFI16. Major component of the ASC pyroptosome, a 1-2 um supramolecular assembly (one per macrophage cell) which consists of oligomerized PYCARD dimers and CASP1. Interacts with CASP1 (precursor form); the interaction induces activation of CASP1 leading to the processing of interleukin-1 beta; PYCARD competes with RIPK2 for binding to CASP1. Interacts with NLRP3; the interaction requires the homooligomerization of NLRP3. Interacts with NLRP2, NLRC4, MEFV, CARD16, AIM2, IFI16, NOD2, RIGI, RIPK2, PYDC1, PYDC2, NLRP10, CASP8, CHUK, IKBKB and BAX. Component of the AIM2 PANoptosome complex, a multiprotein complex that drives inflammatory cell death (PANoptosis). Post-translationally, phosphorylated. In terms of processing, 'Lys-63'-linked polyubiquitination by TRAF3 is critical for speck formation and inflammasome activation. 'Lys-63'-linked deubiquitinated by USP50; a crucial step for NLRP3-mediated inflammasome activation. 'Lys-63'-linked polyubiquitination by PELI1 is also critical for speck formation and inflammasome activation. Deubiquitinated by USP3 that cleaves 'Lys-48'-linked ubiquitin chains and strengthens its stability by blocking proteasomal degradation. Widely expressed at low levels. Detected in peripheral blood leukocytes, lung, small intestine, spleen, thymus, colon and at lower levels in placenta, liver and kidney. Very low expression in skeletal muscle, heart and brain. Expressed in lung epithelial cells (at protein level). Detected in the leukemia cell lines HL-60 and U-937, but not in Jurkat T-cell lymphoma and Daudi Burkitt's lymphoma. Detected in the melanoma cell line WM35, but not in WM793. Not detected in HeLa cervical carcinoma cells and MOLT-4 lymphocytic leukemia cells.

It is found in the cytoplasm. The protein resides in the inflammasome. Its subcellular location is the endoplasmic reticulum. It localises to the mitochondrion. The protein localises to the nucleus. It is found in the golgi apparatus membrane. In terms of biological role, functions as a key mediator in apoptosis and inflammation. Promotes caspase-mediated apoptosis involving predominantly caspase-8 and also caspase-9 in a probable cell type-specific manner. Involved in activation of the mitochondrial apoptotic pathway, promotes caspase-8-dependent proteolytic maturation of BID independently of FADD in certain cell types and also mediates mitochondrial translocation of BAX and activates BAX-dependent apoptosis coupled to activation of caspase-9, -2 and -3. Involved in innate immune response by acting as an integral adapter in the assembly of various inflammasomes (NLRP1, NLRP2, NLRP3, NLRP6, AIM2 and probably IFI16) which recruit and activate caspase-1 leading to processing and secretion of pro-inflammatory cytokines. Caspase-1-dependent inflammation leads to macrophage pyroptosis, a form of cell death. The function as activating adapter in different types of inflammasomes is mediated by the pyrin and CARD domains and their homotypic interactions. Clustered PYCARD nucleates the formation of caspase-1 filaments through the interaction of their respective CARD domains, acting as a platform for of caspase-1 polymerization. In the NLRP1 and NLRC4 inflammasomes seems not be required but facilitates the processing of procaspase-1. In cooperation with NOD2 involved in an inflammasome activated by bacterial muramyl dipeptide leading to caspase-1 activation. May be involved in RIGI-triggered pro-inflammatory responses and inflammasome activation. In collaboration with AIM2 which detects cytosolic double-stranded DNA may also be involved in a caspase-1-independent cell death that involves caspase-8. In adaptive immunity may be involved in maturation of dendritic cells to stimulate T-cell immunity and in cytoskeletal rearrangements coupled to chemotaxis and antigen uptake may be involved in post-transcriptional regulation of the guanine nucleotide exchange factor DOCK2; the latter function is proposed to involve the nuclear form. Also involved in transcriptional activation of cytokines and chemokines independent of the inflammasome; this function may involve AP-1, NF-kappa-B, MAPK and caspase-8 signaling pathways. For regulation of NF-kappa-B activating and inhibiting functions have been reported. Modulates NF-kappa-B induction at the level of the IKK complex by inhibiting kinase activity of CHUK and IKBK. Proposed to compete with RIPK2 for association with CASP1 thereby down-regulating CASP1-mediated RIPK2-dependent NF-kappa-B activation and activating interleukin-1 beta processing. Modulates host resistance to DNA virus infection, probably by inducing the cleavage of and inactivating CGAS in presence of cytoplasmic double-stranded DNA. Functionally, may have a regulating effect on the function as inflammasome adapter. Seems to inhibit inflammasome-mediated maturation of interleukin-1 beta. The chain is Apoptosis-associated speck-like protein containing a CARD from Homo sapiens (Human).